The following is a 484-amino-acid chain: tRNA sulfurtransferase (484 aa).

The THUMP domain occupies 63 to 167 (KEMGERLTCM…DKRLFVIHSQ (105 aa)). ATP contacts are provided by residues 185–186 (LM), Lys267, Gly289, and Gln298. Cys346 and Cys457 are oxidised to a cystine. The Rhodanese domain occupies 405-483 (ALAGQIVIDI…GHANVRVYRP (79 aa)). Cys457 (cysteine persulfide intermediate) is an active-site residue.

This sequence belongs to the ThiI family.

It localises to the cytoplasm. It carries out the reaction [ThiI sulfur-carrier protein]-S-sulfanyl-L-cysteine + a uridine in tRNA + 2 reduced [2Fe-2S]-[ferredoxin] + ATP + H(+) = [ThiI sulfur-carrier protein]-L-cysteine + a 4-thiouridine in tRNA + 2 oxidized [2Fe-2S]-[ferredoxin] + AMP + diphosphate. It catalyses the reaction [ThiS sulfur-carrier protein]-C-terminal Gly-Gly-AMP + S-sulfanyl-L-cysteinyl-[cysteine desulfurase] + AH2 = [ThiS sulfur-carrier protein]-C-terminal-Gly-aminoethanethioate + L-cysteinyl-[cysteine desulfurase] + A + AMP + 2 H(+). It participates in cofactor biosynthesis; thiamine diphosphate biosynthesis. In terms of biological role, catalyzes the ATP-dependent transfer of a sulfur to tRNA to produce 4-thiouridine in position 8 of tRNAs, which functions as a near-UV photosensor. Also catalyzes the transfer of sulfur to the sulfur carrier protein ThiS, forming ThiS-thiocarboxylate. This is a step in the synthesis of thiazole, in the thiamine biosynthesis pathway. The sulfur is donated as persulfide by IscS. The protein is tRNA sulfurtransferase of Pseudomonas fluorescens (strain Pf0-1).